The primary structure comprises 443 residues: Proline--tRNA ligase (443 aa).

Belongs to the class-II aminoacyl-tRNA synthetase family. ProS type 2 subfamily. As to quaternary structure, homodimer.

Its subcellular location is the cytoplasm. The catalysed reaction is tRNA(Pro) + L-proline + ATP = L-prolyl-tRNA(Pro) + AMP + diphosphate. In terms of biological role, catalyzes the attachment of proline to tRNA(Pro) in a two-step reaction: proline is first activated by ATP to form Pro-AMP and then transferred to the acceptor end of tRNA(Pro). This Zymomonas mobilis subsp. mobilis (strain ATCC 31821 / ZM4 / CP4) protein is Proline--tRNA ligase.